The chain runs to 132 residues: Small ribosomal subunit protein uS8 (132 aa).

The protein belongs to the universal ribosomal protein uS8 family. Part of the 30S ribosomal subunit. Contacts proteins S5 and S12.

One of the primary rRNA binding proteins, it binds directly to 16S rRNA central domain where it helps coordinate assembly of the platform of the 30S subunit. This is Small ribosomal subunit protein uS8 from Streptococcus pyogenes serotype M49 (strain NZ131).